The following is a 434-amino-acid chain: Na(+)/H(+) antiporter NhaA 1 (434 aa).

Helical transmembrane passes span 30-50 (TGGL…NVAG), 70-90 (LSIE…VTGL), 108-128 (ALPI…FVLV), 141-161 (VGWA…LAVV), 172-192 (FLLT…AIFY), 195-215 (QVHW…TVAV), 286-306 (FAVP…VSGF), 318-338 (VIAG…WLLA), 354-374 (VLGM…IGSL), and 386-406 (VTLG…VVLS).

This sequence belongs to the NhaA Na(+)/H(+) (TC 2.A.33) antiporter family.

It localises to the cell membrane. The catalysed reaction is Na(+)(in) + 2 H(+)(out) = Na(+)(out) + 2 H(+)(in). Functionally, na(+)/H(+) antiporter that extrudes sodium in exchange for external protons. This chain is Na(+)/H(+) antiporter NhaA 1, found in Kineococcus radiotolerans (strain ATCC BAA-149 / DSM 14245 / SRS30216).